The primary structure comprises 705 residues: Polyribonucleotide nucleotidyltransferase (705 aa).

Residues D494 and D500 each coordinate Mg(2+). A KH domain is found at 561–620 (PRITTVKVKPEKVRAVIGTGGKNIRQIVSETGVTIDVEDDGTVTIASSDMEASARAIAMV). Positions 630–698 (GKIYRGTVKK…KQGKIRLSRK (69 aa)) constitute an S1 motif domain.

The protein belongs to the polyribonucleotide nucleotidyltransferase family. It depends on Mg(2+) as a cofactor.

The protein localises to the cytoplasm. It carries out the reaction RNA(n+1) + phosphate = RNA(n) + a ribonucleoside 5'-diphosphate. Involved in mRNA degradation. Catalyzes the phosphorolysis of single-stranded polyribonucleotides processively in the 3'- to 5'-direction. This Syntrophus aciditrophicus (strain SB) protein is Polyribonucleotide nucleotidyltransferase.